Consider the following 82-residue polypeptide: Protein Vpu (82 aa).

Topologically, residues 1 to 7 (MQPLQIS) are extracellular. A helical transmembrane segment spans residues 8 to 28 (AIVALVVAAIIAIVVWSIALL). At 29–82 (EYRKLLRQRKIDRLIDRIRERAEDSGNESEGDQEELSALVEMGGHDAPWDIDDL) the chain is on the cytoplasmic side. Residues Ser-53 and Ser-57 each carry the phosphoserine; by host CK2 modification.

Belongs to the HIV-1 VPU protein family. Homopentamer. Interacts with host CD4 and BRTC; these interactions induce proteasomal degradation of CD4. Interacts with host BST2; this interaction leads to the degradation of host BST2. Interacts with host FBXW11. Interacts with host AP1M1; this interaction plays a role in the mistrafficking and subsequent degradation of host BST2. Interacts with host RANBP2; this interaction allows Vpu to down-regulate host BLM sumoylation. In terms of processing, phosphorylated by host CK2. This phosphorylation is necessary for interaction with human BTRC and degradation of CD4.

The protein resides in the host membrane. Its activity is regulated as follows. Ion channel activity is inhibited by hexamethylene amiloride in vitro. Functionally, enhances virion budding by targeting host CD4 and Tetherin/BST2 to proteasome degradation. Degradation of CD4 prevents any unwanted premature interactions between viral Env and its host receptor CD4 in the endoplasmic reticulum. Degradation of antiretroviral protein Tetherin/BST2 is important for virion budding, as BST2 tethers new viral particles to the host cell membrane. Mechanistically, Vpu bridges either CD4 or BST2 to BTRC, a substrate recognition subunit of the Skp1/Cullin/F-box protein E3 ubiquitin ligase, induces their ubiquitination and subsequent proteasomal degradation. The alteration of the E3 ligase specificity by Vpu seems to promote the degradation of host IKBKB, leading to NF-kappa-B down-regulation and subsequent apoptosis. Acts as a viroporin that forms an oligomeric ion channel in membranes. Modulates the host DNA repair mechanisms to promote degradation of nuclear viral cDNA in cells that are already productively infected in order to suppress immune sensing and proviral hyper-integration (superinfection). Manipulates PML-NBs and modulates SUMOylation of host BLM protein thereby enhancing its DNA-end processing activity toward viral unintegrated linear DNA. Also inhibits RAD52-mediated homologous repair of viral cDNA, preventing the generation of dead-end circular forms of single copies of the long terminal repeat and permitting sustained nucleolytic attack. This chain is Protein Vpu, found in Homo sapiens (Human).